Consider the following 182-residue polypeptide: Caltractin ICL1b (182 aa).

The tract at residues 1 to 31 (MSRRGQQPPPQQQQAPPQKNQAGKFNPAEFV) is disordered. EF-hand domains are found at residues 38–73 (EEVLEIKEAFDLFDTDGTQSIDPKELKAAMTSLGFE), 74–109 (AKNQTIYQMISDLDTDGSGQIDFAEFLKLMTARISE), 111–146 (DSKADIQKVFNLFDSERAGVITLKDLRKVAKELGET), and 147–182 (MDDSELQEMIDRADSDGDAQVTFEDFYNIMTKKTFA). Residues Asp51, Asp53, Thr55, Ser57, Glu62, Asp87, Asp89, Ser91, Gln93, and Glu98 each contribute to the Ca(2+) site.

The protein belongs to the centrin family.

Its subcellular location is the cytoplasm. The protein localises to the cytoskeleton. Plays a fundamental role in microtubule organizing center structure and function. Component of the infraciliary lattice (ICL) and the ciliary basal bodies. The sequence is that of Caltractin ICL1b (Icl1b) from Paramecium tetraurelia.